The following is a 391-amino-acid chain: Methyltransferase/ribosomally synthesized type I borosin cyclic peptide precursor cmaMA (391 aa).

A methyltransferase domain region spans residues 1-253 (MDATANPKAG…TISTFYLPPK (253 aa)). Catalysis depends on residues R72, Y76, and Y98. S-adenosyl-L-methionine-binding residues include Y98, H100, V103, A130, Q172, A215, S246, and T247. The segment at 254-373 (APSAKVSLNR…AQLSGALKEG (120 aa)) is clasp domain. Residues 374-376 (GVP) are precursor leader. L382 carries the post-translational modification N-methylleucine. F385 and F386 each carry N-methylphenylalanine. N-methylisoleucine is present on residues I387 and I388.

In the N-terminal section; belongs to the precorrin methyltransferase family. As to quaternary structure, homodimer. In terms of processing, cmaMA automethylates at Leu-382, Phe-385, Phe-386, Ile-387 and Ile-388 before being processed by the prolyloligopeptidase ledP which likely forms a peptidyl ester upon removal of the follower propeptide, which then undergoes macrocyclization with the N-terminus of the modified core peptide. Peptide backbone alpha-N-methylations change the physicochemical properties of amide bonds to provide structural constraints and other favorable characteristics including biological membrane permeability to peptides.

It functions in the pathway secondary metabolite biosynthesis. Functionally, fusion protein of the methyltransferase cmaM and a type I borosin core peptide; part of the gene cluster that mediates the biosynthesis of a type I borosin, a highly methylated cyclic peptide with potent biological activities. Type I borosins derive from the C-terminus of the fusion protein, and it is the same protein that methylates its own C-terminus using S-adenosyl methionine (SAM). The C-terminus is subsequently cleaved off and macrocyclized by a prolyloligopeptidase to give the final product. The polypeptide is Methyltransferase/ribosomally synthesized type I borosin cyclic peptide precursor cmaMA (Coprinopsis marcescibilis (Agaric fungus)).